Reading from the N-terminus, the 560-residue chain is Proteasome-associated ATPase (560 aa).

The span at 1–19 (MSQQHDDRRPPDTADRDLA) shows a compositional bias: basic and acidic residues. The disordered stretch occupies residues 1–21 (MSQQHDDRRPPDTADRDLARQ). Residues 16–55 (RDLARQATSLAEKNERLTAALTAARAQLVEMKAQLEEVSK) adopt a coiled-coil conformation. Residue 237 to 242 (GCGKTL) participates in ATP binding. The segment at 559–560 (YL) is docks into pockets in the proteasome alpha-ring.

The protein belongs to the AAA ATPase family. As to quaternary structure, homohexamer. Assembles into a hexameric ring structure that caps the 20S proteasome core. Strongly interacts with the prokaryotic ubiquitin-like protein Pup through a hydrophobic interface; the interacting region of ARC lies in its N-terminal coiled-coil domain. There is one Pup binding site per ARC hexamer ring. Upon ATP-binding, the C-terminus of ARC interacts with the alpha-rings of the proteasome core, possibly by binding to the intersubunit pockets.

The protein operates within protein degradation; proteasomal Pup-dependent pathway. Functionally, ATPase which is responsible for recognizing, binding, unfolding and translocation of pupylated proteins into the bacterial 20S proteasome core particle. May be essential for opening the gate of the 20S proteasome via an interaction with its C-terminus, thereby allowing substrate entry and access to the site of proteolysis. Thus, the C-termini of the proteasomal ATPase may function like a 'key in a lock' to induce gate opening and therefore regulate proteolysis. The protein is Proteasome-associated ATPase of Beutenbergia cavernae (strain ATCC BAA-8 / DSM 12333 / CCUG 43141 / JCM 11478 / NBRC 16432 / NCIMB 13614 / HKI 0122).